The chain runs to 119 residues: Large ribosomal subunit protein bL20 (119 aa).

This sequence belongs to the bacterial ribosomal protein bL20 family.

Its function is as follows. Binds directly to 23S ribosomal RNA and is necessary for the in vitro assembly process of the 50S ribosomal subunit. It is not involved in the protein synthesizing functions of that subunit. The polypeptide is Large ribosomal subunit protein bL20 (Legionella pneumophila (strain Paris)).